An 810-amino-acid chain; its full sequence is DNA gyrase subunit A (810 aa).

The 467-residue stretch at 36-502 (LPDVRDGLKP…EVLKTSMSDL (467 aa)) folds into the Topo IIA-type catalytic domain. The active-site O-(5'-phospho-DNA)-tyrosine intermediate is the Y124. Residues 499 to 810 (MSDLMQKENI…SLVSVSKFIK (312 aa)) are C-terminal domain. Residues 529–535 (QGTGGKG) carry the GyrA-box motif.

It belongs to the type II topoisomerase GyrA/ParC subunit family. As to quaternary structure, heterotetramer, composed of two GyrA and two GyrB chains. In the heterotetramer, GyrA contains the active site tyrosine that forms a transient covalent intermediate with DNA, while GyrB binds cofactors and catalyzes ATP hydrolysis.

The protein localises to the cytoplasm. It carries out the reaction ATP-dependent breakage, passage and rejoining of double-stranded DNA.. A type II topoisomerase that negatively supercoils closed circular double-stranded (ds) DNA in an ATP-dependent manner to modulate DNA topology and maintain chromosomes in an underwound state. Negative supercoiling favors strand separation, and DNA replication, transcription, recombination and repair, all of which involve strand separation. Also able to catalyze the interconversion of other topological isomers of dsDNA rings, including catenanes and knotted rings. Type II topoisomerases break and join 2 DNA strands simultaneously in an ATP-dependent manner. The chain is DNA gyrase subunit A from Borreliella burgdorferi (strain ATCC 35210 / DSM 4680 / CIP 102532 / B31) (Borrelia burgdorferi).